Reading from the N-terminus, the 186-residue chain is Ribosome-recycling factor (186 aa).

It belongs to the RRF family.

It is found in the cytoplasm. In terms of biological role, responsible for the release of ribosomes from messenger RNA at the termination of protein biosynthesis. May increase the efficiency of translation by recycling ribosomes from one round of translation to another. The polypeptide is Ribosome-recycling factor (Cupriavidus necator (strain ATCC 17699 / DSM 428 / KCTC 22496 / NCIMB 10442 / H16 / Stanier 337) (Ralstonia eutropha)).